The sequence spans 536 residues: Indolin-2-one monooxygenase (536 aa).

A helical membrane pass occupies residues 18 to 34 (GTATHALLLGVLIFLVI). Residue Cys-480 coordinates heme.

Belongs to the cytochrome P450 family. Heme serves as cofactor.

It localises to the membrane. The catalysed reaction is indolin-2-one + reduced [NADPH--hemoprotein reductase] + O2 = 3-hydroxyindolin-2-one + oxidized [NADPH--hemoprotein reductase] + H2O + H(+). The protein operates within secondary metabolite biosynthesis; 2,4-dihydroxy-1,4-benzoxazin-3-one biosynthesis; 2,4-dihydroxy-1,4-benzoxazin-3-one from indoleglycerol phosphate: step 3/5. Its function is as follows. Catalyzes the conversion of indolin-2-one to 3-hydroxyindolin-2-one. The chain is Indolin-2-one monooxygenase (CYP71C2) from Zea mays (Maize).